A 197-amino-acid chain; its full sequence is Mediator of RNA polymerase II transcription subunit 21 (197 aa).

The disordered stretch occupies residues 37 to 112; sequence PPPSVPSAVP…APPRPDSPNT (76 aa). 2 stretches are compositionally biased toward low complexity: residues 60 to 70 and 90 to 100; these read PTSGTATNTPG and PQMQQQHQEQP. A coiled-coil region spans residues 140–183; sequence GIKSSEAEQQERIKQLAEELRVVEEERSARRRELRRLGEKVDGL.

Belongs to the Mediator complex subunit 21 family. In terms of assembly, component of the Mediator complex.

The protein resides in the nucleus. Functionally, component of the Mediator complex, a coactivator involved in the regulated transcription of nearly all RNA polymerase II-dependent genes. Mediator functions as a bridge to convey information from gene-specific regulatory proteins to the basal RNA polymerase II transcription machinery. Mediator is recruited to promoters by direct interactions with regulatory proteins and serves as a scaffold for the assembly of a functional preinitiation complex with RNA polymerase II and the general transcription factors. This is Mediator of RNA polymerase II transcription subunit 21 (SRB7) from Coccidioides immitis (strain RS) (Valley fever fungus).